Here is a 46-residue protein sequence, read N- to C-terminus: Ligatoxin-B (46 aa).

3 cysteine pairs are disulfide-bonded: C3-C40, C4-C32, and C16-C26.

The protein belongs to the plant thionin (TC 1.C.44) family.

It is found in the secreted. Functionally, thionins are small plant proteins which are toxic to animal cells. They seem to exert their toxic effect at the level of the cell membrane. Their precise function is not known. This chain is Ligatoxin-B, found in Phoradendron liga (Argentine mistletoe).